We begin with the raw amino-acid sequence, 223 residues long: Protein disulfide-isomerase-like protein EhSep2 (223 aa).

The first 17 residues, 1-17, serve as a signal peptide directing secretion; it reads MALRSLTLLCAAAGASA. A Thioredoxin domain is found at 18–125; sequence GAIELTPDNF…DELKKFAENE (108 aa). Position 47 (Sec47) is a non-standard amino acid, selenocysteine. Residues 155–201 are a coiled coil; the sequence is EKRTEMLETLKKELADAESTHEALLKELQATYKESMDKLEKLKEESA. Residues 201–223 form a disordered region; that stretch reads APKIKLLKAATPAPKAEGAKDEV. The span at 203–216 shows a compositional bias: low complexity; sequence KIKLLKAATPAPKA. The Prevents secretion from ER motif lies at 220–223; that stretch reads KDEV.

The protein belongs to the protein disulfide isomerase family.

Its subcellular location is the endoplasmic reticulum lumen. This chain is Protein disulfide-isomerase-like protein EhSep2 (SEP2), found in Emiliania huxleyi (Coccolithophore).